We begin with the raw amino-acid sequence, 217 residues long: LSM12 homolog A (217 aa).

In terms of domain architecture, Sm spans 9 to 78 (VNAVNDCFSI…CSNVQVIKEC (70 aa)). Positions 86–184 (QKLNLEQVKM…IIKQFFNTRP (99 aa)) constitute an AD domain. A disordered region spans residues 185 to 217 (SPVPESGAAASTSSPSVSPTSSSLASGSPVPAN). The span at 190 to 217 (SGAAASTSSPSVSPTSSSLASGSPVPAN) shows a compositional bias: low complexity.

Belongs to the LSM12 family. Component of the Atx2-tyf activator complex, composed of Atx2, tyf, pAbp, Lsm12a. Interacts with tyf, Atx2 and pAbp.

Component of the Atx2-tyf activator complex which functions in the circadian pacemaker neurons to activate the TYF-dependent translation of per and maintain 24 hour periodicity in circadian behaviors. Within the Atx2-tyf complex, likely to function as a molecular adapter which stabilizes the interaction between Atx2 and the translational regulator tyf. This chain is LSM12 homolog A, found in Drosophila melanogaster (Fruit fly).